Consider the following 161-residue polypeptide: Nucleotide-binding protein Sfri_0732 (161 aa).

It belongs to the YajQ family.

In terms of biological role, nucleotide-binding protein. The sequence is that of Nucleotide-binding protein Sfri_0732 from Shewanella frigidimarina (strain NCIMB 400).